The primary structure comprises 449 residues: Exodeoxyribonuclease 7 large subunit (449 aa).

The protein belongs to the XseA family. As to quaternary structure, heterooligomer composed of large and small subunits.

It is found in the cytoplasm. It catalyses the reaction Exonucleolytic cleavage in either 5'- to 3'- or 3'- to 5'-direction to yield nucleoside 5'-phosphates.. In terms of biological role, bidirectionally degrades single-stranded DNA into large acid-insoluble oligonucleotides, which are then degraded further into small acid-soluble oligonucleotides. The protein is Exodeoxyribonuclease 7 large subunit of Salmonella heidelberg (strain SL476).